The sequence spans 100 residues: Integration host factor subunit alpha (100 aa).

The protein belongs to the bacterial histone-like protein family. Heterodimer of an alpha and a beta chain.

Its function is as follows. This protein is one of the two subunits of integration host factor, a specific DNA-binding protein that functions in genetic recombination as well as in transcriptional and translational control. The sequence is that of Integration host factor subunit alpha from Hahella chejuensis (strain KCTC 2396).